The primary structure comprises 431 residues: MRLAILGGIAVTPERVIEDAGILIDEDGRISFVDTREQLEECEDWEDEIELGEKDVIMPGLINTHTHGPMTLFRGVADDMPLMKWLREEIWPLEERLDAEKCRWGAALAAMEALKSGTTCLADMYFFMDAVAEAYAEVGIRAVISHGMIDLGEEDKREEELKESKRVYRKCQGMEGLIEFSLGPHAPYTCSEELLKEVRRLADEWGVKIQIHVAETEDEVKEVKRKHGKRPVEYLDEIGLLGDDVIAAHCVWLDDKEIEILSKRGVIVSHNPISNMKLASGISPVPEMLERGVNVTIGTDGCASNNNLDMLEEIKVAALLHKVNKMDPSATEMLEILRMATVRAGTVFSSEKIGAIEEGYAADLVVLDGSSPRLNPNHNPISNIVYSASGSDVKHVFVAGELVVKNGKLVKADEQEILENSTECAEQLTSS.

Zn(2+) is bound by residues H65 and H67. Residues E94 and H185 each contribute to the substrate site. A Zn(2+)-binding site is contributed by H212. Residues E215 and D300 each contribute to the substrate site. D300 is a binding site for Zn(2+).

This sequence belongs to the metallo-dependent hydrolases superfamily. MTA/SAH deaminase family. Homotetramer. It depends on Zn(2+) as a cofactor.

It carries out the reaction 5'-deoxyadenosine + H2O + H(+) = 5'-deoxyinosine + NH4(+). The catalysed reaction is S-adenosyl-L-homocysteine + H2O + H(+) = S-inosyl-L-homocysteine + NH4(+). It catalyses the reaction S-methyl-5'-thioadenosine + H2O + H(+) = S-methyl-5'-thioinosine + NH4(+). The enzyme catalyses adenosine + H2O + H(+) = inosine + NH4(+). Its pathway is amino-acid biosynthesis; S-adenosyl-L-methionine biosynthesis. Functionally, catalyzes the deamination of three SAM-derived enzymatic products, namely 5'-deoxyadenosine, S-adenosyl-L-homocysteine, and 5'-methylthioadenosine, to produce the inosine analogs. Can also deaminate adenosine. The preferred substrate for this enzyme is 5'-deoxyadenosine, but all these substrates are efficiently deaminated. Likely functions in a S-adenosyl-L-methionine (SAM) recycling pathway from S-adenosyl-L-homocysteine (SAH) produced from SAM-dependent methylation reactions. May also be involved in the recycling of 5'-deoxyadenosine, whereupon the 5'-deoxyribose moiety of 5'-deoxyinosine is further metabolized to deoxyhexoses used for the biosynthesis of aromatic amino acids in methanogens. This is 5'-deoxyadenosine deaminase from Methanopyrus kandleri (strain AV19 / DSM 6324 / JCM 9639 / NBRC 100938).